Here is a 114-residue protein sequence, read N- to C-terminus: Probable non-functional T cell receptor beta variable 5-3 (114 aa).

A signal peptide spans 1 to 21 (MGPGLLCWELLYLLGAGPVEA). Residues 22-114 (GVTQSPTHLI…SALYLCARSL (93 aa)) form the Ig-like domain. Cys-42 and Cys-110 are disulfide-bonded. Residue Asn-96 is glycosylated (N-linked (GlcNAc...) asparagine).

In terms of assembly, alpha-beta TR is a heterodimer composed of an alpha and beta chain; disulfide-linked. The alpha-beta TR is associated with the transmembrane signaling CD3 coreceptor proteins to form the TR-CD3 (TcR or TCR). The assembly of alpha-beta TR heterodimers with CD3 occurs in the endoplasmic reticulum where a single alpha-beta TR heterodimer associates with one CD3D-CD3E heterodimer, one CD3G-CD3E heterodimer and one CD247 homodimer forming a stable octameric structure. CD3D-CD3E and CD3G-CD3E heterodimers preferentially associate with TR alpha and TR beta chains, respectively. The association of the CD247 homodimer is the last step of TcR assembly in the endoplasmic reticulum and is required for transport to the cell surface.

The protein resides in the cell membrane. Its function is as follows. Probable non-functional open reading frame (ORF) of V region of the variable domain of T cell receptor (TR) beta chain. Non-functional ORF generally cannot participate in the synthesis of a productive T cell receptor (TR) chain due to altered V-(D)-J or switch recombination and/or splicing site (at mRNA level) and/or conserved amino acid change (protein level). Alpha-beta T cell receptors are antigen specific receptors which are essential to the immune response and are present on the cell surface of T lymphocytes. Recognize peptide-major histocompatibility (MH) (pMH) complexes that are displayed by antigen presenting cells (APC), a prerequisite for efficient T cell adaptive immunity against pathogens. Binding of alpha-beta TR to pMH complex initiates TR-CD3 clustering on the cell surface and intracellular activation of LCK that phosphorylates the ITAM motifs of CD3G, CD3D, CD3E and CD247 enabling the recruitment of ZAP70. In turn ZAP70 phosphorylates LAT, which recruits numerous signaling molecules to form the LAT signalosome. The LAT signalosome propagates signal branching to three major signaling pathways, the calcium, the mitogen-activated protein kinase (MAPK) kinase and the nuclear factor NF-kappa-B (NF-kB) pathways, leading to the mobilization of transcription factors that are critical for gene expression and essential for T cell growth and differentiation. The T cell repertoire is generated in the thymus, by V-(D)-J rearrangement. This repertoire is then shaped by intrathymic selection events to generate a peripheral T cell pool of self-MH restricted, non-autoaggressive T cells. Post-thymic interaction of alpha-beta TR with the pMH complexes shapes TR structural and functional avidity. This chain is Probable non-functional T cell receptor beta variable 5-3, found in Homo sapiens (Human).